We begin with the raw amino-acid sequence, 606 residues long: KH domain-containing protein At4g18375 (606 aa).

Residues 1-10 are compositionally biased toward basic residues; the sequence is MVERKKRKQI. The disordered stretch occupies residues 1–26; it reads MVERKKRKQIQRNNSESNRNQKRRIS. 5 KH domains span residues 35 to 99, 138 to 210, 311 to 380, 394 to 455, and 535 to 599; these read LVVY…IGFT, NKEC…LFAV, ELVF…VEAV, NVKM…LIQI, and SSAL…ENLV.

The protein localises to the nucleus. This Arabidopsis thaliana (Mouse-ear cress) protein is KH domain-containing protein At4g18375.